The sequence spans 646 residues: Acetyl-coenzyme A synthetase (646 aa).

CoA contacts are provided by residues 189-192 (RGPK), threonine 307, and asparagine 331. ATP is bound by residues 383 to 385 (GEP), 407 to 412 (DTWWQT), aspartate 496, and arginine 511. Residue serine 519 participates in CoA binding. Arginine 522 provides a ligand contact to ATP. Positions 533, 535, and 538 each coordinate Mg(2+). Arginine 580 is a CoA binding site. An N6-acetyllysine modification is found at lysine 605.

It belongs to the ATP-dependent AMP-binding enzyme family. Mg(2+) serves as cofactor. Post-translationally, acetylated. Deacetylation by the SIR2-homolog deacetylase activates the enzyme.

The enzyme catalyses acetate + ATP + CoA = acetyl-CoA + AMP + diphosphate. Functionally, catalyzes the conversion of acetate into acetyl-CoA (AcCoA), an essential intermediate at the junction of anabolic and catabolic pathways. AcsA undergoes a two-step reaction. In the first half reaction, AcsA combines acetate with ATP to form acetyl-adenylate (AcAMP) intermediate. In the second half reaction, it can then transfer the acetyl group from AcAMP to the sulfhydryl group of CoA, forming the product AcCoA. The chain is Acetyl-coenzyme A synthetase from Desulfatibacillum aliphaticivorans.